We begin with the raw amino-acid sequence, 254 residues long: 3-deoxy-manno-octulosonate cytidylyltransferase (254 aa).

The protein belongs to the KdsB family.

It is found in the cytoplasm. The enzyme catalyses 3-deoxy-alpha-D-manno-oct-2-ulosonate + CTP = CMP-3-deoxy-beta-D-manno-octulosonate + diphosphate. It functions in the pathway nucleotide-sugar biosynthesis; CMP-3-deoxy-D-manno-octulosonate biosynthesis; CMP-3-deoxy-D-manno-octulosonate from 3-deoxy-D-manno-octulosonate and CTP: step 1/1. Its pathway is bacterial outer membrane biogenesis; lipopolysaccharide biosynthesis. In terms of biological role, activates KDO (a required 8-carbon sugar) for incorporation into bacterial lipopolysaccharide in Gram-negative bacteria. This chain is 3-deoxy-manno-octulosonate cytidylyltransferase, found in Haemophilus influenzae (strain PittEE).